Reading from the N-terminus, the 120-residue chain is UPF0231 protein YacL (120 aa).

The protein belongs to the UPF0231 family.

In Salmonella typhi, this protein is UPF0231 protein YacL.